A 124-amino-acid chain; its full sequence is Histone H2A (124 aa).

Over residues 1–18 (MSGRGKGGKVKGKAKSRS) the composition is skewed to basic residues. The interval 1–21 (MSGRGKGGKVKGKAKSRSNRA) is disordered. Ser2 carries the N-acetylserine modification. The residue at position 2 (Ser2) is a Phosphoserine. Residue Lys36 is modified to N6-succinyllysine. Residue Gln104 is modified to N5-methylglutamine. Lys119 participates in a covalent cross-link: Glycyl lysine isopeptide (Lys-Gly) (interchain with G-Cter in ubiquitin). A Phosphothreonine modification is found at Thr120.

It belongs to the histone H2A family. In terms of assembly, the nucleosome is a histone octamer containing two molecules each of H2A, H2B, H3 and H4 assembled in one H3-H4 heterotetramer and two H2A-H2B heterodimers. The octamer wraps approximately 147 bp of DNA. Post-translationally, the chromatin-associated form, but not the free cytoplasmic form, is phosphorylated on Thr-120 by NHK-1 during mitosis, and dephosphorylated during S-phase. Also phosphorylated on Thr-120 by NHK-1 during prophase I of meiosis; which is required for acetylation of H3 'Lys-14' and H4 'Lys-5', diassembly of the synaptonemal complex, and karyosome formation. In terms of processing, monoubiquitination of Lys-119 by sce/dRING gives a specific tag for epigenetic transcriptional repression. Phosphorylation on Ser-2 is enhanced during mitosis. Phosphorylation on Ser-2 directly represses transcription.

It localises to the nucleus. The protein localises to the chromosome. Functionally, core component of nucleosome. Nucleosomes wrap and compact DNA into chromatin, limiting DNA accessibility to the cellular machineries which require DNA as a template. Histones thereby play a central role in transcription regulation, DNA repair, DNA replication and chromosomal stability. DNA accessibility is regulated via a complex set of post-translational modifications of histones, also called histone code, and nucleosome remodeling. The protein is Histone H2A (His2A) of Drosophila erecta (Fruit fly).